Reading from the N-terminus, the 306-residue chain is Methionyl-tRNA formyltransferase (306 aa).

110 to 113 (SLLP) is a binding site for (6S)-5,6,7,8-tetrahydrofolate.

This sequence belongs to the Fmt family.

The catalysed reaction is L-methionyl-tRNA(fMet) + (6R)-10-formyltetrahydrofolate = N-formyl-L-methionyl-tRNA(fMet) + (6S)-5,6,7,8-tetrahydrofolate + H(+). In terms of biological role, attaches a formyl group to the free amino group of methionyl-tRNA(fMet). The formyl group appears to play a dual role in the initiator identity of N-formylmethionyl-tRNA by promoting its recognition by IF2 and preventing the misappropriation of this tRNA by the elongation apparatus. The chain is Methionyl-tRNA formyltransferase from Brucella suis (strain ATCC 23445 / NCTC 10510).